A 437-amino-acid polypeptide reads, in one-letter code: tRNA-2-methylthio-N(6)-dimethylallyladenosine synthase (437 aa).

The region spanning 5 to 121 (KKLYIKTYGC…LPELTARAAT (117 aa)) is the MTTase N-terminal domain. 6 residues coordinate [4Fe-4S] cluster: Cys-14, Cys-50, Cys-84, Cys-159, Cys-163, and Cys-166. One can recognise a Radical SAM core domain in the interval 145 to 371 (AKRGPTAFLT…QALLTRQQRA (227 aa)). Residues 374-436 (DAKVGTTARV…ANSLRGVLIA (63 aa)) enclose the TRAM domain.

The protein belongs to the methylthiotransferase family. MiaB subfamily. As to quaternary structure, monomer. It depends on [4Fe-4S] cluster as a cofactor.

Its subcellular location is the cytoplasm. The enzyme catalyses N(6)-dimethylallyladenosine(37) in tRNA + (sulfur carrier)-SH + AH2 + 2 S-adenosyl-L-methionine = 2-methylsulfanyl-N(6)-dimethylallyladenosine(37) in tRNA + (sulfur carrier)-H + 5'-deoxyadenosine + L-methionine + A + S-adenosyl-L-homocysteine + 2 H(+). Catalyzes the methylthiolation of N6-(dimethylallyl)adenosine (i(6)A), leading to the formation of 2-methylthio-N6-(dimethylallyl)adenosine (ms(2)i(6)A) at position 37 in tRNAs that read codons beginning with uridine. In Dinoroseobacter shibae (strain DSM 16493 / NCIMB 14021 / DFL 12), this protein is tRNA-2-methylthio-N(6)-dimethylallyladenosine synthase.